The chain runs to 1089 residues: Pentatricopeptide repeat-containing protein MRL1, chloroplastic (1089 aa).

Residues 1 to 72 (MEVTSTTFIS…SIRSPRLVVR (72 aa)) constitute a chloroplast transit peptide. PPR repeat units lie at residues 466 to 500 (TMST…GMTA), 501 to 535 (DCKL…GVEA), 536 to 570 (NLHT…NVKP), 571 to 605 (DRVV…THPI), 608 to 642 (DHIS…GIRG), 643 to 677 (TPEV…DVTP), 678 to 712 (DEVF…GIRL), 713 to 747 (GTIS…KLRP), 748 to 782 (TIST…GLKP), and 783 to 817 (NTIT…GVSP).

It belongs to the PPR family. P subfamily. Expressed in stems, leaves and sepals.

The protein localises to the plastid. It localises to the chloroplast. Functionally, regulator of the large subunit (LS) of RuBisCO. Involved either in the processing or in the stabilization of the processed transcript, probably by acting as a barrier to the 5'&gt;3' degradation. The protein is Pentatricopeptide repeat-containing protein MRL1, chloroplastic (MRL1) of Arabidopsis thaliana (Mouse-ear cress).